A 689-amino-acid chain; its full sequence is Protein asunder (689 aa).

Positions 521-550 (NGARLKLSKAKDQYRLLYRELEQLIQLNAT) form a coiled coil. 2 disordered regions span residues 578 to 619 (GASL…SKRR) and 662 to 689 (PDFG…SVRS). The span at 599 to 614 (SSGSASGSSNSNSLLK) shows a compositional bias: low complexity. The short motif at 613–619 (LKASKRR) is the Nuclear localization signal (NLS) element.

It belongs to the Integrator subunit 13 family. Belongs to the multiprotein complex Integrator, at least composed of IntS1, IntS2, IntS3, IntS4, omd/IntS5, IntS6, defl/IntS7, IntS8, IntS9, IntS10, IntS11, IntS12, asun/IntS13, IntS14 and IntS15. The core complex associates with protein phosphatase 2A subunits mts/PP2A and Pp2A-29B, to form the Integrator-PP2A (INTAC) complex. Post-translationally, phosphorylated.

Its subcellular location is the nucleus. It is found in the cytoplasm. It localises to the perinuclear region. Its function is as follows. Component of the integrator complex, a multiprotein complex that terminates RNA polymerase II (Pol II) transcription in the promoter-proximal region of genes. The integrator complex provides a quality checkpoint during transcription elongation by driving premature transcription termination of transcripts that are unfavorably configured for transcriptional elongation: the complex terminates transcription by (1) catalyzing dephosphorylation of the C-terminal domain (CTD) of Pol II subunit Polr2A/Rbp1 and Spt5, and (2) degrading the exiting nascent RNA transcript via endonuclease activity. The integrator complex is also involved in the 3'-end processing of the U7 snRNA, and also the spliceosomal snRNAs U1, U2, U4 and U5. The sequence is that of Protein asunder (asun) from Drosophila yakuba (Fruit fly).